Consider the following 607-residue polypeptide: Large ribosomal subunit assembly factor BipA (607 aa).

A tr-type G domain is found at E3–D198. Residues D15–T20 and N128–D131 contribute to the GTP site. The tract at residues G481–E607 is C-terminal domain (CTD), required but not sufficient to bind 70S or 30S ribosomes.

Belongs to the TRAFAC class translation factor GTPase superfamily. Classic translation factor GTPase family. BipA subfamily. As to quaternary structure, monomer.

The protein resides in the cytoplasm. The enzyme catalyses GTP + H2O = GDP + phosphate + H(+). Its activity is regulated as follows. Ribosome-associated GTPase is not affected by low levels of ppGpp, &gt;40 uM ppGpp and &gt;50 uM GDP inhibit GTPase. The C-terminus (residues 387-607 or 481-607) inhibits GTPase activity, in its absence kcat increases, but GTPase is no longer stimulated by 70S ribosome or 30S or 50S subunits. A 50S ribosomal subunit assembly protein with GTPase activity, required for 50S subunit assembly at low temperatures, may also play a role in translation. Binds GTP and analogs. Binds the 70S ribosome between the 30S and 50S subunits, in a similar position as ribosome-bound EF-G; it contacts a number of ribosomal proteins, both rRNAs and the A-site tRNA. A ribosome-stimulated GTPase, GTPase activity increases 4 fold in the presence of 70S ribosomes. Binds 70S ribosomes in the presence of GTP or its non-hydrolyzable analog GMPPNP; in the presence of ppGpp or under stress conditions it binds to 30S ribosomal subunits. This Salmonella typhimurium (strain LT2 / SGSC1412 / ATCC 700720) protein is Large ribosomal subunit assembly factor BipA.